Reading from the N-terminus, the 905-residue chain is Clumping factor B (905 aa).

The N-terminal stretch at 1–44 (MKKRIDYLSNKQNKYSIRRFTVGTTSVIVGATILFGIGNHQAQA) is a signal peptide. Residues 15–26 (YSIRRFTVGTTS) carry the YSIRK-G/S signaling motif motif. 2 stretches are compositionally biased toward polar residues: residues 44 to 61 (ASEQ…NASA) and 68 to 101 (MIET…KPMS). The interval 44–191 (ASEQSNDTTQ…AQGTSKPSVR (148 aa)) is disordered. The tract at residues 45 to 542 (SEQSNDTTQS…GSADGDSAVN (498 aa)) is ligand binding A region. Residues 102 to 119 (TQTSNTTTTEPASTNETP) show a composition bias toward low complexity. Residues 134 to 189 (QDQTVPQEANSQVDNKTTNDANSIATNSELKNPQTLDLPQSSPQTISNAQGTSKPS) are compositionally biased toward polar residues. Residues 272–276 (DYSNS) carry the MIDAS-like motif motif. The tract at residues 530–877 (YGGGSADGDS…ETGDKSENTN (348 aa)) is disordered. A compositionally biased stretch (pro residues) spans 545 to 555 (DPTPGPPVDPE). A compositionally biased stretch (acidic residues) spans 556–829 (PSPDPEPEPS…SDSDSDSDSD (274 aa)). A compositionally biased stretch (polar residues) spans 833-844 (RVTPPNNEQKAP). Basic and acidic residues predominate over residues 861–874 (HKTDALPETGDKSE). The LPXTG sorting signal signature appears at 866–870 (LPETG). Position 869 is a pentaglycyl murein peptidoglycan amidated threonine (Thr-869). Positions 870–905 (GDKSENTNATLFGAMMALLGSLLLFRKRKQDHKEKA) are cleaved as a propeptide — removed by sortase.

The protein belongs to the serine-aspartate repeat-containing protein (SDr) family. Post-translationally, proteolytically cleaved by aureolysin (aur). This cleavage leads to the inactivation of ClfB.

It is found in the secreted. The protein localises to the cell wall. In terms of biological role, cell surface-associated protein implicated in virulence by promoting bacterial attachment to both alpha- and beta-chains of human fibrinogen and inducing the formation of bacterial clumps. This chain is Clumping factor B (clfB), found in Staphylococcus aureus (strain MSSA476).